Here is a 297-residue protein sequence, read N- to C-terminus: Homoserine kinase (297 aa).

84-94 (PLSKGFGSSAA) contacts ATP.

This sequence belongs to the GHMP kinase family. Homoserine kinase subfamily.

The protein localises to the cytoplasm. The enzyme catalyses L-homoserine + ATP = O-phospho-L-homoserine + ADP + H(+). It functions in the pathway amino-acid biosynthesis; L-threonine biosynthesis; L-threonine from L-aspartate: step 4/5. Functionally, catalyzes the ATP-dependent phosphorylation of L-homoserine to L-homoserine phosphate. In Shouchella clausii (strain KSM-K16) (Alkalihalobacillus clausii), this protein is Homoserine kinase.